The following is a 166-amino-acid chain: Small ribosomal subunit protein uS4 (166 aa).

The S4 RNA-binding domain maps to 102 to 164 (RRLQTIVWRK…HPSCLEVEKE (63 aa)).

Belongs to the universal ribosomal protein uS4 family. Part of the 30S ribosomal subunit. Contacts protein S5. The interaction surface between S4 and S5 is involved in control of translational fidelity.

Its function is as follows. One of the primary rRNA binding proteins, it binds directly to 16S rRNA where it nucleates assembly of the body of the 30S subunit. In terms of biological role, with S5 and S12 plays an important role in translational accuracy. This is Small ribosomal subunit protein uS4 from Korarchaeum cryptofilum (strain OPF8).